The sequence spans 261 residues: Indole-3-glycerol phosphate synthase (261 aa).

This sequence belongs to the TrpC family.

It catalyses the reaction 1-(2-carboxyphenylamino)-1-deoxy-D-ribulose 5-phosphate + H(+) = (1S,2R)-1-C-(indol-3-yl)glycerol 3-phosphate + CO2 + H2O. The protein operates within amino-acid biosynthesis; L-tryptophan biosynthesis; L-tryptophan from chorismate: step 4/5. This Burkholderia pseudomallei (strain 668) protein is Indole-3-glycerol phosphate synthase.